The primary structure comprises 307 residues: Fructose-bisphosphate aldolase (307 aa).

S49 is a D-glyceraldehyde 3-phosphate binding site. D82 serves as the catalytic Proton donor. Zn(2+) is bound by residues H83, D104, E134, and H180. Residue G181 coordinates dihydroxyacetone phosphate. H210 is a Zn(2+) binding site. Dihydroxyacetone phosphate is bound by residues 211–213 (GAS) and 253–256 (NTDT).

The protein belongs to the class II fructose-bisphosphate aldolase family. Homodimer. Zn(2+) is required as a cofactor.

It carries out the reaction beta-D-fructose 1,6-bisphosphate = D-glyceraldehyde 3-phosphate + dihydroxyacetone phosphate. Its pathway is carbohydrate degradation; glycolysis; D-glyceraldehyde 3-phosphate and glycerone phosphate from D-glucose: step 4/4. Catalyzes the aldol condensation of dihydroxyacetone phosphate (DHAP or glycerone-phosphate) with glyceraldehyde 3-phosphate (G3P) to form fructose 1,6-bisphosphate (FBP) in gluconeogenesis and the reverse reaction in glycolysis. In Helicobacter pylori (strain ATCC 700392 / 26695) (Campylobacter pylori), this protein is Fructose-bisphosphate aldolase (fba).